Here is a 681-residue protein sequence, read N- to C-terminus: Kojibiose hydrolase (681 aa).

The N-terminal stretch at 1-23 (MKKYIFNHVFFFLMLCGSNYLYS) is a signal peptide. Beta-D-glucose-binding residues include Arg74, Trp343, Asp344, Trp391, Glu392, Thr407, Glu472, Trp473, Lys538, Gln539, and Asp573. The active-site Proton donor is the Glu472. Glu616 (proton acceptor) is an active-site residue.

It belongs to the glycosyl hydrolase 65 family. Homohexamer; dimer of trimers.

Its subcellular location is the periplasm. The catalysed reaction is kojibiose + H2O = beta-D-glucose + D-glucose. Its function is as follows. Glycosidase that specifically hydrolyzes kojibiose to beta-glucose and glucose. Also hydrolyzes, with lower catalytic efficiency, longer kojioligosaccharides (from kojitriose to kojipentaose) and shorter oligosaccharides produced by the degradation of dextran-containing alpha-1,2 branches. Probably acts on alpha-(1-&gt;2)-glucosyl isomaltooligosaccharides. Shows weak activity with nigerose but has no activity toward p-nitrophenyl alpha-glucopyranoside, which is a general substrate of exo-acting alpha-glucoside hydrolases. Has a strict specificity for alpha-1,2-glucosidic linkages. Catalyzes the hydrolytic reaction via an anomer-inverting mechanism. The chain is Kojibiose hydrolase from Flavobacterium johnsoniae (strain ATCC 17061 / DSM 2064 / JCM 8514 / BCRC 14874 / CCUG 350202 / NBRC 14942 / NCIMB 11054 / UW101) (Cytophaga johnsonae).